The primary structure comprises 135 residues: Large ribosomal subunit protein uL16c (135 aa).

The protein belongs to the universal ribosomal protein uL16 family. Part of the 50S ribosomal subunit.

Its subcellular location is the plastid. It is found in the chloroplast. This chain is Large ribosomal subunit protein uL16c, found in Nymphaea alba (White water-lily).